The sequence spans 963 residues: MHC class II regulatory factor RFX1 (963 aa).

Disordered stretches follow at residues 1 to 88 (MATQ…APSP), 105 to 126 (ASET…VPTQ), 174 to 218 (QSPA…GTPA), and 361 to 392 (SSSE…GSSG). The segment covering 20–41 (PQAPPQALPQPPPPAAPQPPAA) has biased composition (pro residues). The segment covering 42–67 (ATPQPQYVTELQSPQPQTQPPGSQKQ) has biased composition (low complexity). Residue S54 is modified to Phosphoserine. A compositionally biased stretch (pro residues) spans 75–87 (APAPSQPATPAPS). Polar residues-rich tracts occupy residues 107–119 (ETVS…STAS), 181–196 (KSGQ…QQVH), and 204–214 (VQANNSTSKTA). Residues 361–372 (SSSEAGASNSSV) show a composition bias toward low complexity. Residues 373 to 392 (GAGGNGGGGSSGGGSGGSSG) show a composition bias toward gly residues. The RFX-type winged-helix DNA-binding region spans 423–498 (TVQWLLDNYE…YHYYGLRIKA (76 aa)). The disordered stretch occupies residues 899–948 (SLNPLDPDKDEEEEEEEESEDELPQDISLAAGSESPALGPEALEPPAKLA). Acidic residues predominate over residues 906–922 (DKDEEEEEEEESEDELP). Residues 932-947 (ESPALGPEALEPPAKL) show a composition bias toward low complexity. S962 and S963 each carry phosphoserine.

The protein belongs to the RFX family. In terms of assembly, homodimer; binds DNA as a homodimer. Heterodimer; heterodimerizes with RFX2 and RFX3.

Its subcellular location is the nucleus. Its function is as follows. Regulatory factor essential for MHC class II genes expression. Binds to the X boxes of MHC class II genes. The chain is MHC class II regulatory factor RFX1 (Rfx1) from Mus musculus (Mouse).